The following is a 51-amino-acid chain: Ovomucoid (51 aa).

The region spanning 3 to 51 is the Kazal-like domain; the sequence is VDCSGYPKPACTLEYFPLCGSDNQTYANKCAFCNAVVEKNVTLRHLGKC. Disulfide bonds link Cys5/Cys35, Cys13/Cys32, and Cys21/Cys51. Residue Asn42 is glycosylated (N-linked (GlcNAc...) asparagine).

The protein resides in the secreted. The sequence is that of Ovomucoid from Nothoprocta cinerascens (Brushland tinamou).